Here is a 415-residue protein sequence, read N- to C-terminus: Dynein assembly factor with WD repeat domains 1 (415 aa).

8 WD repeats span residues 90-129 (AHIL…ELNT), 132-174 (GHRN…HTFR), 175-214 (GHTA…EVYT), 217-256 (GHSA…KVNI), 259-298 (GHCA…CVAT), 301-340 (GHDD…CIAK), 343-384 (GHEG…QVLE), and 386-415 (HTDE…RIWR).

The protein belongs to the WD repeat WDR69 family. As to quaternary structure, interacts with IFT46.

The protein resides in the cytoplasm. Its subcellular location is the cytoskeleton. It localises to the flagellum basal body. The protein localises to the flagellum axoneme. Its function is as follows. Required for axonemal dynein assembly and ciliary motility in ciliated organs, including Kupffer's vesicle, during embryogenesis. Facilitates the onset of robust cilia motility during development. The protein is Dynein assembly factor with WD repeat domains 1 of Homo sapiens (Human).